The chain runs to 184 residues: Large ribosomal subunit protein uL15 (184 aa).

The segment at 1–62 (MDLSSLRPAK…QMPMYRRLPK (62 aa)) is disordered. The span at 21 to 35 (RGPGSGNGTTAGKGN) shows a compositional bias: gly residues.

The protein belongs to the universal ribosomal protein uL15 family. Part of the 50S ribosomal subunit.

Binds to the 23S rRNA. The protein is Large ribosomal subunit protein uL15 of Chlorobaculum parvum (strain DSM 263 / NCIMB 8327) (Chlorobium vibrioforme subsp. thiosulfatophilum).